Here is a 295-residue protein sequence, read N- to C-terminus: Acetylglutamate kinase (295 aa).

Substrate-binding positions include 70–71 (GG), Arg92, and Asn191.

It belongs to the acetylglutamate kinase family. ArgB subfamily.

It is found in the cytoplasm. The enzyme catalyses N-acetyl-L-glutamate + ATP = N-acetyl-L-glutamyl 5-phosphate + ADP. It functions in the pathway amino-acid biosynthesis; L-arginine biosynthesis; N(2)-acetyl-L-ornithine from L-glutamate: step 2/4. Its function is as follows. Catalyzes the ATP-dependent phosphorylation of N-acetyl-L-glutamate. This is Acetylglutamate kinase from Mycolicibacterium paratuberculosis (strain ATCC BAA-968 / K-10) (Mycobacterium paratuberculosis).